The following is a 260-amino-acid chain: Thiazole synthase (260 aa).

Lysine 96 serves as the catalytic Schiff-base intermediate with DXP. Residues glycine 157, 184–185, and 206–207 each bind 1-deoxy-D-xylulose 5-phosphate; these read AG and NT.

It belongs to the ThiG family. As to quaternary structure, homotetramer. Forms heterodimers with either ThiH or ThiS.

It localises to the cytoplasm. The catalysed reaction is [ThiS sulfur-carrier protein]-C-terminal-Gly-aminoethanethioate + 2-iminoacetate + 1-deoxy-D-xylulose 5-phosphate = [ThiS sulfur-carrier protein]-C-terminal Gly-Gly + 2-[(2R,5Z)-2-carboxy-4-methylthiazol-5(2H)-ylidene]ethyl phosphate + 2 H2O + H(+). The protein operates within cofactor biosynthesis; thiamine diphosphate biosynthesis. Functionally, catalyzes the rearrangement of 1-deoxy-D-xylulose 5-phosphate (DXP) to produce the thiazole phosphate moiety of thiamine. Sulfur is provided by the thiocarboxylate moiety of the carrier protein ThiS. In vitro, sulfur can be provided by H(2)S. The chain is Thiazole synthase from Rhodopseudomonas palustris (strain TIE-1).